The primary structure comprises 315 residues: Heme oxygenase 2 (315 aa).

Residues 1 to 15 (MSSEVETSEGVDESE) show a composition bias toward polar residues. The segment at 1 to 29 (MSSEVETSEGVDESENNSTAPEKENHTKM) is disordered. An N-acetylserine modification is found at Ser2. Ser2 is modified (phosphoserine). Residues 2–294 (SSEVETSEGV…TAMAVLRKPS (293 aa)) are Cytoplasmic-facing. 4 residues coordinate heme b: His44, Tyr153, Lys198, and Arg202. HRM repeat units lie at residues 263–268 (KCPFYA) and 280–285 (NCPFRT). S-nitrosocysteine occurs at positions 264 and 281. Residues 295-315 (LQLILAASVALVAGLLAWYYM) traverse the membrane as a helical; Anchor for type IV membrane protein segment.

Belongs to the heme oxygenase family. A soluble form arises by proteolytic removal of the membrane anchor. Post-translationally, S-nitrosylated by BLVRB. As to expression, widely distributed in body with a high concentration in the brain.

The protein localises to the microsome membrane. It is found in the endoplasmic reticulum membrane. The enzyme catalyses heme b + 3 reduced [NADPH--hemoprotein reductase] + 3 O2 = biliverdin IXalpha + CO + Fe(2+) + 3 oxidized [NADPH--hemoprotein reductase] + 3 H2O + H(+). Its activity is regulated as follows. Inhibited by metalloporphyrins such as Sn- and Zn-protoporphyrins. In terms of biological role, catalyzes the oxidative cleavage of heme at the alpha-methene bridge carbon, released as carbon monoxide (CO), to generate biliverdin IXalpha, while releasing the central heme iron chelate as ferrous iron. The sequence is that of Heme oxygenase 2 (Hmox2) from Rattus norvegicus (Rat).